Reading from the N-terminus, the 200-residue chain is dITP/XTP pyrophosphatase (200 aa).

7-12 provides a ligand contact to substrate; it reads TQNKRK. Mg(2+) is bound by residues Glu42 and Asp71. The active-site Proton acceptor is Asp71. Substrate-binding positions include Ser72, 156–159, Lys179, and 184–185; these read FGYD and HR.

It belongs to the HAM1 NTPase family. In terms of assembly, homodimer. Mg(2+) is required as a cofactor.

The catalysed reaction is XTP + H2O = XMP + diphosphate + H(+). The enzyme catalyses dITP + H2O = dIMP + diphosphate + H(+). It carries out the reaction ITP + H2O = IMP + diphosphate + H(+). In terms of biological role, pyrophosphatase that catalyzes the hydrolysis of nucleoside triphosphates to their monophosphate derivatives, with a high preference for the non-canonical purine nucleotides XTP (xanthosine triphosphate), dITP (deoxyinosine triphosphate) and ITP. Seems to function as a house-cleaning enzyme that removes non-canonical purine nucleotides from the nucleotide pool, thus preventing their incorporation into DNA/RNA and avoiding chromosomal lesions. This Malacoplasma penetrans (strain HF-2) (Mycoplasma penetrans) protein is dITP/XTP pyrophosphatase.